A 388-amino-acid chain; its full sequence is Chorismate synthase (388 aa).

NADP(+) contacts are provided by R39 and R45. Residues 132–134 (RSS), 251–252 (NA), G296, 311–315 (KPIPT), and R337 contribute to the FMN site.

The protein belongs to the chorismate synthase family. Homotetramer. FMNH2 serves as cofactor.

It catalyses the reaction 5-O-(1-carboxyvinyl)-3-phosphoshikimate = chorismate + phosphate. Its pathway is metabolic intermediate biosynthesis; chorismate biosynthesis; chorismate from D-erythrose 4-phosphate and phosphoenolpyruvate: step 7/7. In terms of biological role, catalyzes the anti-1,4-elimination of the C-3 phosphate and the C-6 proR hydrogen from 5-enolpyruvylshikimate-3-phosphate (EPSP) to yield chorismate, which is the branch point compound that serves as the starting substrate for the three terminal pathways of aromatic amino acid biosynthesis. This reaction introduces a second double bond into the aromatic ring system. The chain is Chorismate synthase from Staphylococcus epidermidis (strain ATCC 35984 / DSM 28319 / BCRC 17069 / CCUG 31568 / BM 3577 / RP62A).